A 150-amino-acid chain; its full sequence is Transcriptional repressor NrdR (150 aa).

The segment at 3–34 is a zinc-finger region; the sequence is CPYCQFEDTRVIDSRLASEGEQVRRRRECNRC. Residues 49 to 139 form the ATP-cone domain; the sequence is PRIVKRDGTR…VYRSFEDVSA (91 aa).

Belongs to the NrdR family. Zn(2+) is required as a cofactor.

Its function is as follows. Negatively regulates transcription of bacterial ribonucleotide reductase nrd genes and operons by binding to NrdR-boxes. The sequence is that of Transcriptional repressor NrdR from Alkalilimnicola ehrlichii (strain ATCC BAA-1101 / DSM 17681 / MLHE-1).